We begin with the raw amino-acid sequence, 377 residues long: Nitric oxide reductase FlRd-NAD(+) reductase (377 aa).

This sequence belongs to the FAD-dependent oxidoreductase family. FAD is required as a cofactor.

Its subcellular location is the cytoplasm. It catalyses the reaction 2 reduced [nitric oxide reductase rubredoxin domain] + NAD(+) + H(+) = 2 oxidized [nitric oxide reductase rubredoxin domain] + NADH. The protein operates within nitrogen metabolism; nitric oxide reduction. Its function is as follows. One of at least two accessory proteins for anaerobic nitric oxide (NO) reductase. Reduces the rubredoxin moiety of NO reductase. The chain is Nitric oxide reductase FlRd-NAD(+) reductase from Escherichia coli O139:H28 (strain E24377A / ETEC).